We begin with the raw amino-acid sequence, 347 residues long: Ubiquitin thioesterase Otu1 (347 aa).

The region spanning 5-87 (FSVKLKSKKG…LIVEEKAAPA (83 aa)) is the Ubiquitin-like domain. Positions 8 to 89 (KLKSKKGQFI…VEEKAAPAPA (82 aa)) are UBX-like. An OTU domain is found at 150 to 274 (LLKKVVPADN…GIHYDPLYME (125 aa)). The interval 155–161 (VPADNSC) is cys-loop. Asp158 is an active-site residue. Residue Cys161 is the Nucleophile of the active site. A variable-loop region spans residues 213–223 (IQKADSWGGAI). The his-loop stretch occupies residues 263–267 (FDGIH). Position 266 (Ile266) interacts with substrate. His267 is a catalytic residue. An S2 site region spans residues 290–295 (LGVYQQ). The segment at 317-341 (LRCMQCDVRLVGQVQAQEHAKQTGH) adopts a C2H2-type zinc-finger fold. Residue His341 is part of the active site.

The catalysed reaction is Thiol-dependent hydrolysis of ester, thioester, amide, peptide and isopeptide bonds formed by the C-terminal Gly of ubiquitin (a 76-residue protein attached to proteins as an intracellular targeting signal).. Functionally, hydrolase that can remove conjugated ubiquitin from proteins and may therefore play an important regulatory role at the level of protein turnover by preventing degradation. Involved in the regulation of DNA damage repair. The polypeptide is Ubiquitin thioesterase Otu1 (Drosophila melanogaster (Fruit fly)).